Here is a 321-residue protein sequence, read N- to C-terminus: Glucokinase (321 aa).

8-13 is a binding site for ATP; that stretch reads ADIGGT.

This sequence belongs to the bacterial glucokinase family.

It localises to the cytoplasm. The enzyme catalyses D-glucose + ATP = D-glucose 6-phosphate + ADP + H(+). This chain is Glucokinase, found in Paramagnetospirillum magneticum (strain ATCC 700264 / AMB-1) (Magnetospirillum magneticum).